Here is a 337-residue protein sequence, read N- to C-terminus: MTRLISADKSEDDLLEASLRPRALSDYVGQEKAKGNLGLFIDAARGRGEALDHVLLYGPPGLGKTTLANIIACEMGVNIKSTSGPVIERPGDLAAILTNLEAHDVLFIDEIHRLSHVVEEILYPAMEDFQLDIIIGQGPSARTIKLDLPKFTLVGATTRAGLLSSPLRDRFGVISRLEFYTHDELAFIITRSARIFGMAIAPEGAMELARRSRGTPRIANRLLRRVRDFAQVRADGVITRAVADQALALLEIDEMGFDMMDRAILLTIIDKFGGGPVGLDTIAAAISEESDTIEDVYEPFLIQNGFLNRTPRGRVATAAAYSHFGRIAPEPPQGKLF.

The tract at residues 1–180 (MTRLISADKS…FGVISRLEFY (180 aa)) is large ATPase domain (RuvB-L). ATP contacts are provided by residues Leu-19, Arg-20, Gly-61, Lys-64, Thr-65, Thr-66, 127–129 (EDF), Arg-170, Tyr-180, and Arg-217. Residue Thr-65 coordinates Mg(2+). Positions 181–251 (THDELAFIIT…VADQALALLE (71 aa)) are small ATPAse domain (RuvB-S). A head domain (RuvB-H) region spans residues 254–337 (EMGFDMMDRA…APEPPQGKLF (84 aa)). Arg-309 and Arg-314 together coordinate DNA.

Belongs to the RuvB family. As to quaternary structure, homohexamer. Forms an RuvA(8)-RuvB(12)-Holliday junction (HJ) complex. HJ DNA is sandwiched between 2 RuvA tetramers; dsDNA enters through RuvA and exits via RuvB. An RuvB hexamer assembles on each DNA strand where it exits the tetramer. Each RuvB hexamer is contacted by two RuvA subunits (via domain III) on 2 adjacent RuvB subunits; this complex drives branch migration. In the full resolvosome a probable DNA-RuvA(4)-RuvB(12)-RuvC(2) complex forms which resolves the HJ.

Its subcellular location is the cytoplasm. It carries out the reaction ATP + H2O = ADP + phosphate + H(+). Its function is as follows. The RuvA-RuvB-RuvC complex processes Holliday junction (HJ) DNA during genetic recombination and DNA repair, while the RuvA-RuvB complex plays an important role in the rescue of blocked DNA replication forks via replication fork reversal (RFR). RuvA specifically binds to HJ cruciform DNA, conferring on it an open structure. The RuvB hexamer acts as an ATP-dependent pump, pulling dsDNA into and through the RuvAB complex. RuvB forms 2 homohexamers on either side of HJ DNA bound by 1 or 2 RuvA tetramers; 4 subunits per hexamer contact DNA at a time. Coordinated motions by a converter formed by DNA-disengaged RuvB subunits stimulates ATP hydrolysis and nucleotide exchange. Immobilization of the converter enables RuvB to convert the ATP-contained energy into a lever motion, pulling 2 nucleotides of DNA out of the RuvA tetramer per ATP hydrolyzed, thus driving DNA branch migration. The RuvB motors rotate together with the DNA substrate, which together with the progressing nucleotide cycle form the mechanistic basis for DNA recombination by continuous HJ branch migration. Branch migration allows RuvC to scan DNA until it finds its consensus sequence, where it cleaves and resolves cruciform DNA. The polypeptide is Holliday junction branch migration complex subunit RuvB (Geobacter sp. (strain M21)).